The sequence spans 261 residues: Oxidoreductase ptaF (261 aa).

This sequence belongs to the avfA family.

It participates in secondary metabolite biosynthesis. Functionally, oxidoreductase; part of the gene cluster that mediates the biosynthesis of pestheic acid, a diphenyl ether which is a biosynthetic precursor of the unique chloropupukeananes. The biosynthesis initiates from condensation of acetate and malonate units catalyzed by the non-reducing PKS ptaA. As the ptaA protein is TE/CLC domain-deficient, hydrolysis and Claisen cyclization of the polyketide could be catalyzed by ptaB containing a beta-lactamase domain. The ptaB protein might hydrolyze the thioester bond between the ACP of ptaA and the intermediate to release atrochrysone carboxylic acid, which is spontaneously dehydrated to form endocrocin anthrone. Endocrocin anthrone is then converted to endocrocin, catalyzed by the anthrone oxygenase ptaC. Spontaneous decarboxylation of endocrocin occurs to generate emodin. An O-methyltransferase (ptaH or ptaI) could methylate emodin to form physcion. PtaJ could then catalyze the oxidative cleavage of physcion, and rotation of the intermediate could then afford desmethylisosulochrin. PtaF, a putative NADH-dependent oxidoreductase, might also participate in the oxidative cleavage step. Desmethylisosulochrin is then transformed by another O-methyltransferase (ptaH or ptaI) to form isosulochrin. Chlorination of isosulochrin by ptaM in the cyclohexadienone B ring then produces chloroisosulochrin. PtaE is responsible for the oxidative coupling reactions of both benzophenones isosulouchrin and chloroisosulochrin to RES-1214-1 and pestheic acid respectively, regardless of chlorination. This Pestalotiopsis fici (strain W106-1 / CGMCC3.15140) protein is Oxidoreductase ptaF.